Reading from the N-terminus, the 152-residue chain is Cell division protein SepF (152 aa).

Residues 21–56 (EYIETEQDHPEEHEQQKDKQPAYAQKPQGKQNVVSL) are disordered. Residues 26-40 (EQDHPEEHEQQKDKQ) are compositionally biased toward basic and acidic residues.

The protein belongs to the SepF family. Homodimer. Interacts with FtsZ.

It is found in the cytoplasm. Cell division protein that is part of the divisome complex and is recruited early to the Z-ring. Probably stimulates Z-ring formation, perhaps through the cross-linking of FtsZ protofilaments. Its function overlaps with FtsA. The protein is Cell division protein SepF of Bacillus velezensis (strain DSM 23117 / BGSC 10A6 / LMG 26770 / FZB42) (Bacillus amyloliquefaciens subsp. plantarum).